Reading from the N-terminus, the 460-residue chain is Argininosuccinate lyase (460 aa).

It belongs to the lyase 1 family. Argininosuccinate lyase subfamily.

The protein resides in the cytoplasm. It catalyses the reaction 2-(N(omega)-L-arginino)succinate = fumarate + L-arginine. Its pathway is amino-acid biosynthesis; L-arginine biosynthesis; L-arginine from L-ornithine and carbamoyl phosphate: step 3/3. The polypeptide is Argininosuccinate lyase (Nitratidesulfovibrio vulgaris (strain DSM 19637 / Miyazaki F) (Desulfovibrio vulgaris)).